The following is a 168-amino-acid chain: Protein FAM163A (168 aa).

Residues 6–26 traverse the membrane as a helical segment; it reads VVITGGILATVILLCIIAVLC.

It belongs to the FAM163 family.

It localises to the membrane. This chain is Protein FAM163A (Fam163a), found in Mus musculus (Mouse).